The following is a 371-amino-acid chain: Glycosyltransferase 8 domain-containing protein 1 (371 aa).

The Cytoplasmic portion of the chain corresponds to 1–7 (MSFRKVN). Residues 8–28 (IIILVLAVALFLLVLHHNFLS) traverse the membrane as a helical; Signal-anchor for type II membrane protein segment. Over 29–371 (LSSLLRNEVT…RRYTEISNIK (343 aa)) the chain is Lumenal. N-linked (GlcNAc...) asparagine glycans are attached at residues Asn249 and Asn257.

It belongs to the glycosyltransferase 8 family.

Its subcellular location is the membrane. The sequence is that of Glycosyltransferase 8 domain-containing protein 1 (GLT8D1) from Homo sapiens (Human).